We begin with the raw amino-acid sequence, 457 residues long: Forkhead box protein N3 (457 aa).

The disordered stretch occupies residues 1-24; that stretch reads MGPVMPASKKAESSGISVSSGLSQ. The segment covering 13–23 has biased composition (low complexity); that stretch reads SSGISVSSGLS. Residues Ser83, Ser85, and Ser97 each carry the phosphoserine modification. The segment at 86-109 is disordered; the sequence is PVQDLDDDTPPSPAHSDMPYDARQ. Residues 114-210 constitute a DNA-binding region (fork-head); sequence KPPYSFSCLI…QALKKTPYHP (97 aa). The disordered stretch occupies residues 285 to 422; it reads RTESEPPCGS…PESDDEEMKE (138 aa). 2 stretches are compositionally biased toward low complexity: residues 308–331 and 342–353; these read SSAK…SSSS and GSQEGSEGSFQS. A compositionally biased stretch (basic and acidic residues) spans 354–376; sequence HESHSEPEEEDRKPSPKEGKDAL. Positions 384–396 are enriched in basic residues; sequence QHKKRQHFAKARK. A Phosphoserine modification is found at Ser415.

Interacts through its C-terminus with the C-terminus of SNW1/SKIP.

Its subcellular location is the nucleus. Its function is as follows. Acts as a transcriptional repressor. May be involved in DNA damage-inducible cell cycle arrests (checkpoints). The protein is Forkhead box protein N3 (Foxn3) of Mus musculus (Mouse).